We begin with the raw amino-acid sequence, 173 residues long: Co-chaperone protein HscB homolog (173 aa).

One can recognise a J domain in the interval 5 to 77 (CHYALFDLQP…PRRARYLLAI (73 aa)).

The protein belongs to the HscB family. Interacts with HscA and stimulates its ATPase activity.

Functionally, co-chaperone involved in the maturation of iron-sulfur cluster-containing proteins. Seems to help targeting proteins to be folded toward HscA. This chain is Co-chaperone protein HscB homolog, found in Pseudomonas entomophila (strain L48).